We begin with the raw amino-acid sequence, 195 residues long: Interferon tau-11 (195 aa).

A signal peptide spans 1–23 (MAFVLSLLMALVLVSYGPGGSLG). Intrachain disulfides connect Cys24-Cys122 and Cys52-Cys162. Asn101 carries N-linked (GlcNAc...) asparagine glycosylation.

The protein belongs to the alpha/beta interferon family. IFN-alphaII subfamily. Constitutively and exclusively expressed in the mononuclear cells of the extraembryonic trophectoderm.

It localises to the secreted. Its function is as follows. Paracrine hormone primarily responsible for maternal recognition of pregnancy. Interacts with endometrial receptors, probably type I interferon receptors, and blocks estrogen receptor expression, preventing the estrogen-induced increase in oxytocin receptor expression in the endometrium. This results in the suppression of the pulsatile endometrial release of the luteolytic hormone prostaglandin F2-alpha, hindering the regression of the corpus luteum (luteolysis) and therefore a return to ovarian cyclicity. This, and a possible direct effect of IFN-tau on prostaglandin synthesis, leads in turn to continued ovarian progesterone secretion, which stimulates the secretion by the endometrium of the nutrients required for the growth of the conceptus. In summary, displays particularly high antiviral and antiproliferative potency concurrently with particular weak cytotoxicity, high antiluteolytic activity and immunomodulatory properties. In contrast with other IFNs, IFN-tau is not virally inducible. The polypeptide is Interferon tau-11 (IFNT11) (Ovis aries (Sheep)).